Here is a 444-residue protein sequence, read N- to C-terminus: Putative GTP cyclohydrolase URC1 (444 aa).

268 to 272 (RVHDE) contacts GTP. Residues Cys-273, Cys-284, and Cys-286 each contribute to the Zn(2+) site. Residue 315–317 (EGR) participates in GTP binding. Asp-353 functions as the Proton acceptor in the catalytic mechanism. The active-site Nucleophile is Arg-355. 2 residues coordinate GTP: Ser-377 and Lys-382.

Belongs to the GTP cyclohydrolase II family.

The protein resides in the cytoplasm. It is found in the nucleus. Involved in uracil catabolism. This chain is Putative GTP cyclohydrolase URC1 (URC1), found in Lachancea kluyveri (Yeast).